Here is a 200-residue protein sequence, read N- to C-terminus: NADH-quinone oxidoreductase subunit C (200 aa).

It belongs to the complex I 30 kDa subunit family. In terms of assembly, NDH-1 is composed of 14 different subunits. Subunits NuoB, C, D, E, F, and G constitute the peripheral sector of the complex.

It is found in the cell inner membrane. The enzyme catalyses a quinone + NADH + 5 H(+)(in) = a quinol + NAD(+) + 4 H(+)(out). Its function is as follows. NDH-1 shuttles electrons from NADH, via FMN and iron-sulfur (Fe-S) centers, to quinones in the respiratory chain. The immediate electron acceptor for the enzyme in this species is believed to be ubiquinone. Couples the redox reaction to proton translocation (for every two electrons transferred, four hydrogen ions are translocated across the cytoplasmic membrane), and thus conserves the redox energy in a proton gradient. This is NADH-quinone oxidoreductase subunit C from Paraburkholderia xenovorans (strain LB400).